Reading from the N-terminus, the 75-residue chain is Small ribosomal subunit protein bS18 (75 aa).

The protein belongs to the bacterial ribosomal protein bS18 family. In terms of assembly, part of the 30S ribosomal subunit. Forms a tight heterodimer with protein bS6.

Functionally, binds as a heterodimer with protein bS6 to the central domain of the 16S rRNA, where it helps stabilize the platform of the 30S subunit. This is Small ribosomal subunit protein bS18 from Buchnera aphidicola subsp. Schizaphis graminum (strain Sg).